Consider the following 363-residue polypeptide: NADH-quinone oxidoreductase subunit H (363 aa).

Transmembrane regions (helical) follow at residues 62 to 82 (GPMY…KLLF), 94 to 114 (AIFV…WAVV), 127 to 147 (VGLL…ILAG), 166 to 186 (VVSY…AAGS), 202 to 222 (FFDW…VSGV), 239 to 257 (IVAG…LFFL), 264 to 286 (ILVS…QGWV), 293 to 313 (LIDW…LFFA), and 339 to 359 (FIPL…SGVI).

Belongs to the complex I subunit 1 family. NDH-1 is composed of 14 different subunits. Subunits NuoA, H, J, K, L, M, N constitute the membrane sector of the complex.

The protein resides in the cell inner membrane. It carries out the reaction a quinone + NADH + 5 H(+)(in) = a quinol + NAD(+) + 4 H(+)(out). In terms of biological role, NDH-1 shuttles electrons from NADH, via FMN and iron-sulfur (Fe-S) centers, to quinones in the respiratory chain. The immediate electron acceptor for the enzyme in this species is believed to be ubiquinone. Couples the redox reaction to proton translocation (for every two electrons transferred, four hydrogen ions are translocated across the cytoplasmic membrane), and thus conserves the redox energy in a proton gradient. This subunit may bind ubiquinone. The protein is NADH-quinone oxidoreductase subunit H of Xylella fastidiosa (strain 9a5c).